Consider the following 596-residue polypeptide: Aspartic proteinase MKC7 (596 aa).

A signal peptide spans 1 to 22 (MKLSVLTFVVDALLVCSSIVDA). A propeptide spanning residues 23-65 (GVTDFPSLPSNEVYVKMNFQKKYGSSFENALDDTKGRTRLMTR) is cleaved from the precursor. Positions 81-468 (YSVELDIGTP…DLDNMEISMA (388 aa)) constitute a Peptidase A1 domain. Residue aspartate 99 is part of the active site. Residues asparagine 180, asparagine 190, asparagine 219, asparagine 229, asparagine 232, asparagine 286, and asparagine 346 are each glycosylated (N-linked (GlcNAc...) asparagine). Aspartate 360 is an active-site residue. N-linked (GlcNAc...) asparagine glycosylation is found at asparagine 471 and asparagine 517. Low complexity predominate over residues 530 to 570 (ATSSSSSKGQKTQTSTTALSISKSTSSTSSTGMLSPTSSSS). The disordered stretch occupies residues 530-578 (ATSSSSSKGQKTQTSTTALSISKSTSSTSSTGMLSPTSSSSTRKENGGH). Residue asparagine 575 is the site of GPI-anchor amidated asparagine attachment. Residues 576–596 (GGHNLNPPFFARFITAIFHHI) constitute a propeptide, removed in mature form.

Belongs to the peptidase A1 family.

The protein localises to the cell membrane. It carries out the reaction Hydrolyzes various precursor proteins with Arg or Lys in P1, and commonly Arg or Lys also in P2. The P3 amino acid is usually non-polar, but otherwise additional basic amino acids are favorable in both non-prime and prime positions.. Cleaves proteins C-terminally to the most C-terminal basic residue. Can process the alpha-mating factor precursor. Required for cell wall integrity. In Saccharomyces cerevisiae (strain ATCC 204508 / S288c) (Baker's yeast), this protein is Aspartic proteinase MKC7 (MKC7).